Here is a 317-residue protein sequence, read N- to C-terminus: Taste receptor type 2 member 14 (317 aa).

The Extracellular segment spans residues 1–7 (MGGVIKS). Residues 8–28 (IFTFVLIVEFIIGNLGNSFIA) form a helical membrane-spanning segment. Residues 29-55 (LVNCIDWVKGRKISSVDRILTALAISK) lie on the Cytoplasmic side of the membrane. A helical transmembrane segment spans residues 56–76 (ISLVWLIFGSWCVSVFFPALF). Topologically, residues 77–87 (ATEKMFRMLTN) are extracellular. Cholesterol-binding residues include threonine 86 and tryptophan 89. Residues 88–108 (IWTVINHFSVWLATGLGTFYF) form a helical membrane-spanning segment. At 109-129 (LKIANFSNSIFLYLKWRVKKV) the chain is on the cytoplasmic side. The helical transmembrane segment at 130–150 (VLVLLLVTSVFLFLNIALINI) threads the bilayer. Topologically, residues 151–184 (HINASINGYRRNKTCSSDSSNFTRFSSLIVLTST) are extracellular. N-linked (GlcNAc...) asparagine glycans are attached at residues asparagine 153, asparagine 162, and asparagine 171. Valine 180 contacts cholesterol. The chain crosses the membrane as a helical span at residues 185–205 (VFIFIPFTLSLAMFLLLIFSX). Residues 206 to 232 (WKHRKKMQHTVKRSGDASTKAHRGVKS) lie on the Cytoplasmic side of the membrane. Residues 233–253 (VXTFFLLYAIFCLSFFISVWT) form a helical membrane-spanning segment. The Extracellular portion of the chain corresponds to 254–261 (SERLEENL). Residues 262–282 (IILSQVMGMAYPSCHSCVLIL) traverse the membrane as a helical segment. The cholesterol site is built by serine 265 and methionine 268. The Cytoplasmic segment spans residues 283-317 (GNKKLRQASLSVLLWLRYMFKDGEPSGHKEFRESS).

The protein belongs to the G-protein coupled receptor T2R family. Core component of the TAS2R14-GNAI1 complex, consisting of TAS2R14, GNAI1, GNB1 and GNG2; within the complex interacts with GNAI1. Core component of the TAS2R14-GNAT3 complex, consisting of TAS2R14, GNAT3, GNB1 and GNG2; within the complex interacts with GNAT3. Core component of the TAS2R14-GNAS2 complex, consisting of TAS2R14, GNAS2, GNB1 and GNG2; within the complex interacts with GNAS2.

The protein resides in the membrane. It carries out the reaction Ca(2+)(in) = Ca(2+)(out). The enzyme catalyses 3',5'-cyclic AMP(in) = 3',5'-cyclic AMP(out). Basal activity is enhanced by binding to bitter tastants, such as flufenamic acid and aristolochic acid. Regulated by cholesterol in a concentration-dependent manner. Gustducin-linked G-protein coupled receptor that plays a role in the perception of bitterness. The activity of this receptor stimulates GNAT3, activating the gustducin G-protein pathway. Likely plays a role in sensing the chemical composition of the gastrointestinal content and other extra-oral tissues via the inhibitory G-protein pathways. The protein is Taste receptor type 2 member 14 (TAS2R14) of Pan troglodytes (Chimpanzee).